We begin with the raw amino-acid sequence, 383 residues long: Acetylornithine deacetylase (383 aa).

Histidine 80 is a binding site for Zn(2+). Aspartate 82 is a catalytic residue. Residue aspartate 112 participates in Zn(2+) binding. Glutamate 144 is a catalytic residue. 3 residues coordinate Zn(2+): glutamate 145, glutamate 169, and histidine 355.

It belongs to the peptidase M20A family. ArgE subfamily. In terms of assembly, homodimer. Zn(2+) serves as cofactor. The cofactor is Co(2+). Requires glutathione as cofactor.

It localises to the cytoplasm. The catalysed reaction is N(2)-acetyl-L-ornithine + H2O = L-ornithine + acetate. It functions in the pathway amino-acid biosynthesis; L-arginine biosynthesis; L-ornithine from N(2)-acetyl-L-ornithine (linear): step 1/1. Its function is as follows. Catalyzes the hydrolysis of the amide bond of N(2)-acetylated L-amino acids. Cleaves the acetyl group from N-acetyl-L-ornithine to form L-ornithine, an intermediate in L-arginine biosynthesis pathway, and a branchpoint in the synthesis of polyamines. This Escherichia coli O7:K1 (strain IAI39 / ExPEC) protein is Acetylornithine deacetylase.